Consider the following 264-residue polypeptide: PDZ domain-containing protein 9 (264 aa).

The 80-residue stretch at 30 to 109 (QTKLTVGSLG…GTVLQIKVYR (80 aa)) folds into the PDZ domain.

In Homo sapiens (Human), this protein is PDZ domain-containing protein 9 (PDZD9).